We begin with the raw amino-acid sequence, 247 residues long: Uridylate kinase (247 aa).

An ATP-binding site is contributed by 15–18; it reads KLSG. An involved in allosteric activation by GTP region spans residues 23 to 28; that stretch reads GDEGFG. Gly-57 is a binding site for UMP. ATP-binding residues include Gly-58 and Arg-62. UMP contacts are provided by residues Asp-77 and 138 to 145; that span reads TGNPFFTT. ATP is bound by residues Thr-165, Tyr-171, and Asp-174.

It belongs to the UMP kinase family. Homohexamer.

The protein resides in the cytoplasm. The enzyme catalyses UMP + ATP = UDP + ADP. It participates in pyrimidine metabolism; CTP biosynthesis via de novo pathway; UDP from UMP (UMPK route): step 1/1. Its activity is regulated as follows. Allosterically activated by GTP. Inhibited by UTP. Functionally, catalyzes the reversible phosphorylation of UMP to UDP. The protein is Uridylate kinase of Colwellia psychrerythraea (strain 34H / ATCC BAA-681) (Vibrio psychroerythus).